The chain runs to 345 residues: Green-sensitive opsin (345 aa).

Topologically, residues 1-37 (MENGTEGKNFYIPMNNRTGLVRSPYEYPQYYLADPWQ) are extracellular. N-linked (GlcNAc...) asparagine glycans are attached at residues Asn3 and Asn16. Residues 38–62 (FKLLGIYMFFLILTGFPINALTLVV) form a helical membrane-spanning segment. Topologically, residues 63-74 (TAQNKKLRQPLN) are cytoplasmic. The helical transmembrane segment at 75 to 100 (FILVNLAVAGLIMVCFGFTVCIYSCM) threads the bilayer. Residues 101 to 114 (VGYFSLGPLGCTIE) are Extracellular-facing. Residues Cys111 and Cys188 are joined by a disulfide bond. A helical membrane pass occupies residues 115–134 (GFMATLGGQVSLWSLVVLAI). At 135-153 (ERYIVVCKPMGSFKFTATH) the chain is on the cytoplasmic side. The chain crosses the membrane as a helical span at residues 154–177 (SAAGCAFTWIMASSCAVPPLVGWS). Residues 178–203 (RYIPEGIQVSCGPDYYTLAPGFNNES) lie on the Extracellular side of the membrane. Asn201 carries an N-linked (GlcNAc...) asparagine glycan. The helical transmembrane segment at 204-231 (FVMYMFSCHFCVPVFTIFFTYGSLVMTV) threads the bilayer. At 232 to 253 (KAAAAQQQDSASTQKAEKEVTR) the chain is on the cytoplasmic side. Residues 254–277 (MCFLMVLGFLLAWVPYASYAAWIF) traverse the membrane as a helical segment. Residues 278 to 285 (FNRGAAFS) lie on the Extracellular side of the membrane. Residues 286–310 (AMSMAIPSFFSKSSALFNPIIYILL) form a helical membrane-spanning segment. Position 297 is an N6-(retinylidene)lysine (Lys297). Over 311-345 (NKQFRNCMLATIGMGGMVEDETSVSTSKTEVSTAA) the chain is Cytoplasmic.

It belongs to the G-protein coupled receptor 1 family. Opsin subfamily. Phosphorylated on some or all of the serine and threonine residues present in the C-terminal region. As to expression, the color pigments are found in the cone photoreceptor cells.

It is found in the membrane. Its function is as follows. Visual pigments are the light-absorbing molecules that mediate vision. They consist of an apoprotein, opsin, covalently linked to cis-retinal. This chain is Green-sensitive opsin, found in Oryzias latipes (Japanese rice fish).